The sequence spans 131 residues: Protein FAM107B (131 aa).

N-acetylalanine is present on Ala-2. Disordered stretches follow at residues 39–78 (MNQK…KKKS) and 100–131 (KLQE…AQES). Position 50 is an N6-acetyllysine (Lys-50). Residues 52-78 (ELQKVMEKRRRDQVIKQKEEEAQKKKS) are compositionally biased toward basic and acidic residues. The stretch at 61 to 112 (RRDQVIKQKEEEAQKKKSDLEIELLKRQQKLEQLELEKQKLQEEQENAPEFV) forms a coiled coil.

It belongs to the FAM107 family.

This chain is Protein FAM107B, found in Rattus norvegicus (Rat).